We begin with the raw amino-acid sequence, 362 residues long: Cytochrome c oxidase subunit 2 (362 aa).

An N-terminal signal peptide occupies residues M1 to G28. A lipid anchor (N-palmitoyl cysteine) is attached at C29. A lipid anchor (S-diacylglycerol cysteine) is attached at C29. The next 2 membrane-spanning stretches (helical) occupy residues F60–I80 and I107–F127. The disordered stretch occupies residues S171–D206. A compositionally biased stretch (basic and acidic residues) spans T176–Q191. A compositionally biased stretch (polar residues) spans N197–D206. Cu cation-binding residues include H246, C287, E289, C291, H295, and M298. A disordered region spans residues N325–A362.

It belongs to the cytochrome c oxidase subunit 2 family. As to quaternary structure, associates with subunits I, III and IV to form cytochrome c oxidase. Binuclear copper center (CuA) is required as a cofactor.

The protein resides in the cell membrane. The catalysed reaction is 4 Fe(II)-[cytochrome c] + O2 + 8 H(+)(in) = 4 Fe(III)-[cytochrome c] + 2 H2O + 4 H(+)(out). Subunits I and II form the functional core of the enzyme complex. Electrons originating in cytochrome c are transferred via heme a and Cu(A) to the binuclear center formed by heme a3 and Cu(B). This chain is Cytochrome c oxidase subunit 2 (ctaC), found in Corynebacterium diphtheriae (strain ATCC 700971 / NCTC 13129 / Biotype gravis).